A 183-amino-acid chain; its full sequence is Inner membrane protein p54 (183 aa).

The chain crosses the membrane as a helical span at residues 32–52; sequence YTILIAIVVLVIIIIVLIYLF. The tract at residues 81–157 is disordered; sequence EVTPQPGTSK…PYTTVTTQNT (77 aa). The segment covering 111 to 122 has biased composition (polar residues); it reads RPATNKPVTDNP. A compositionally biased stretch (low complexity) spans 130–143; sequence ATGGPAAAPAAASA. Residues 149-161 are interaction with host DYNLL1; the sequence is YTTVTTQNTASQT.

The protein belongs to the asfivirus envelope protein p54 family. In terms of assembly, interacts with the host light chain cytoplasmic dynein DYNLL1; this interaction is critical for intracellular microtubule-dependent virus transport toward viral factories.

The protein localises to the virion membrane. Its subcellular location is the host cytoplasm. The protein resides in the host cytoskeleton. It is found in the host endoplasmic reticulum membrane. Functionally, inner envelope protein involved, through its interaction with host dynein, in the intracellular microtubule-dependent transport of viral capsid toward viral factories. Seems to induce caspase-3 activation and apoptosis. Plays a role in virion morphogenesis by recruiting and transforming the host ER membranes into the precursors of the viral envelope. Involved in virus attachment to the host cell. This chain is Inner membrane protein p54, found in Ornithodoros (relapsing fever ticks).